The primary structure comprises 457 residues: Siroheme synthase (457 aa).

The tract at residues 1-204 is precorrin-2 dehydrogenase /sirohydrochlorin ferrochelatase; sequence MDHLPIFCQL…ADEKAVNATT (204 aa). NAD(+) contacts are provided by residues 22-23 and 43-44; these read DV and LT. Serine 128 is modified (phosphoserine). The uroporphyrinogen-III C-methyltransferase stretch occupies residues 216–457; that stretch reads GEVVLVGAGP…RDKLNWFSNY (242 aa). Proline 225 provides a ligand contact to S-adenosyl-L-methionine. Residue aspartate 248 is the Proton acceptor of the active site. The active-site Proton donor is lysine 270. S-adenosyl-L-methionine contacts are provided by residues 301–303, isoleucine 306, 331–332, methionine 382, and glycine 411; these read GGD and TA.

The protein in the N-terminal section; belongs to the precorrin-2 dehydrogenase / sirohydrochlorin ferrochelatase family. In the C-terminal section; belongs to the precorrin methyltransferase family.

The catalysed reaction is uroporphyrinogen III + 2 S-adenosyl-L-methionine = precorrin-2 + 2 S-adenosyl-L-homocysteine + H(+). It catalyses the reaction precorrin-2 + NAD(+) = sirohydrochlorin + NADH + 2 H(+). The enzyme catalyses siroheme + 2 H(+) = sirohydrochlorin + Fe(2+). It participates in cofactor biosynthesis; adenosylcobalamin biosynthesis; precorrin-2 from uroporphyrinogen III: step 1/1. The protein operates within cofactor biosynthesis; adenosylcobalamin biosynthesis; sirohydrochlorin from precorrin-2: step 1/1. It functions in the pathway porphyrin-containing compound metabolism; siroheme biosynthesis; precorrin-2 from uroporphyrinogen III: step 1/1. Its pathway is porphyrin-containing compound metabolism; siroheme biosynthesis; siroheme from sirohydrochlorin: step 1/1. It participates in porphyrin-containing compound metabolism; siroheme biosynthesis; sirohydrochlorin from precorrin-2: step 1/1. Functionally, multifunctional enzyme that catalyzes the SAM-dependent methylations of uroporphyrinogen III at position C-2 and C-7 to form precorrin-2 via precorrin-1. Then it catalyzes the NAD-dependent ring dehydrogenation of precorrin-2 to yield sirohydrochlorin. Finally, it catalyzes the ferrochelation of sirohydrochlorin to yield siroheme. This chain is Siroheme synthase, found in Salmonella heidelberg (strain SL476).